Here is a 197-residue protein sequence, read N- to C-terminus: Peptide deformylase (197 aa).

Fe cation-binding residues include Cys106 and His148. Glu149 is a catalytic residue. His152 contacts Fe cation.

This sequence belongs to the polypeptide deformylase family. Fe(2+) is required as a cofactor.

The catalysed reaction is N-terminal N-formyl-L-methionyl-[peptide] + H2O = N-terminal L-methionyl-[peptide] + formate. In terms of biological role, removes the formyl group from the N-terminal Met of newly synthesized proteins. Requires at least a dipeptide for an efficient rate of reaction. N-terminal L-methionine is a prerequisite for activity but the enzyme has broad specificity at other positions. The polypeptide is Peptide deformylase (Mycolicibacterium gilvum (strain PYR-GCK) (Mycobacterium gilvum (strain PYR-GCK))).